The primary structure comprises 385 residues: Chaperone protein DnaJ (385 aa).

One can recognise a J domain in the interval 5–70; it reads DYYEVLGVAK…QKRAAYDRYG (66 aa). Residues 145–223 form a CR-type zinc finger; it reads GFDTEIRVPS…CDGVGRTRRN (79 aa). Zn(2+)-binding residues include Cys-158, Cys-161, Cys-175, Cys-178, Cys-197, Cys-200, Cys-211, and Cys-214. 4 CXXCXGXG motif repeats span residues 158 to 165, 175 to 182, 197 to 204, and 211 to 218; these read CDTCHGSG, CRTCGGSG, CPTCHGTG, and CPSCDGVG.

It belongs to the DnaJ family. As to quaternary structure, homodimer. Requires Zn(2+) as cofactor.

The protein localises to the cytoplasm. Its function is as follows. Participates actively in the response to hyperosmotic and heat shock by preventing the aggregation of stress-denatured proteins and by disaggregating proteins, also in an autonomous, DnaK-independent fashion. Unfolded proteins bind initially to DnaJ; upon interaction with the DnaJ-bound protein, DnaK hydrolyzes its bound ATP, resulting in the formation of a stable complex. GrpE releases ADP from DnaK; ATP binding to DnaK triggers the release of the substrate protein, thus completing the reaction cycle. Several rounds of ATP-dependent interactions between DnaJ, DnaK and GrpE are required for fully efficient folding. Also involved, together with DnaK and GrpE, in the DNA replication of plasmids through activation of initiation proteins. The sequence is that of Chaperone protein DnaJ from Bordetella pertussis (strain Tohama I / ATCC BAA-589 / NCTC 13251).